Here is a 63-residue protein sequence, read N- to C-terminus: Cecropin-C (63 aa).

An N-terminal signal peptide occupies residues 1–23; that stretch reads MNFYKIFVFVALILAISIGQSEA. Arg62 carries the post-translational modification Arginine amide.

It belongs to the cecropin family.

It localises to the secreted. Cecropins have lytic and antibacterial activity against several Gram-positive and Gram-negative bacteria. The polypeptide is Cecropin-C (CecC) (Drosophila mauritiana (Fruit fly)).